Here is a 192-residue protein sequence, read N- to C-terminus: Erythropoietin (192 aa).

A signal peptide spans 1 to 26 (MGSCECPALLLLLSLLLLPLGLPVLG). 2 disulfides stabilise this stretch: Cys33-Cys187 and Cys55-Cys59. The N-linked (GlcNAc...) asparagine glycan is linked to Asn50. Asn64 and Asn109 each carry an N-linked (GlcNAc...) asparagine glycan.

It belongs to the EPO/TPO family. Produced by kidney or liver of adult mammals and by liver of fetal or neonatal mammals.

The protein localises to the secreted. Hormone involved in the regulation of erythrocyte proliferation and differentiation and the maintenance of a physiological level of circulating erythrocyte mass. Binds to EPOR leading to EPOR dimerization and JAK2 activation thereby activating specific downstream effectors, including STAT1 and STAT3. The chain is Erythropoietin (EPO) from Felis catus (Cat).